The chain runs to 480 residues: Bindin (480 aa).

An N-terminal signal peptide occupies residues 1–20 (MDSQVLPLILLIIVFAASSA). Positions 21-247 (HGHFPHRTNQ…GEMRAERQRR (227 aa)) are excised as a propeptide. The interval 161 to 211 (AEMRHRRSAKDDDVNKRASPRKGSSPAGKKVQIMEQDAGKGDAHNEKEVVK) is disordered. The segment covering 197–211 (DAGKGDAHNEKEVVK) has biased composition (basic and acidic residues). The interval 377-385 (LRHLRHHSN) is fucose-binding domain. The chain crosses the membrane as a helical span at residues 431-451 (GAGAVAGAAMAAGMPPYPGGA). The disordered stretch occupies residues 452–480 (QGGMRVGGQPQNPMGGNAYNPMTGYRQQG).

The protein belongs to the bindin family.

Its subcellular location is the cytoplasmic vesicle. The protein localises to the secretory vesicle. It localises to the acrosome membrane. Species-specific sea urchin sperm protein required for adhesion of sperm to the egg surface during fertilization. Bindin coats the acrosomal process after it is externalized by the acrosome reaction. It binds to sulfated, fucose-containing polysaccharides on the vitelline layer receptor proteoglycans which cover the egg plasma membrane. This chain is Bindin, found in Arbacia punctulata (Punctuate sea urchin).